Here is a 60-residue protein sequence, read N- to C-terminus: uncharacterized protein (60 aa).

The chain crosses the membrane as a helical span at residues 27-49 (YYWLVSTARMVLGVTILILILIG).

The protein localises to the membrane. This is an uncharacterized protein from Archaeoglobus fulgidus (strain ATCC 49558 / DSM 4304 / JCM 9628 / NBRC 100126 / VC-16).